We begin with the raw amino-acid sequence, 252 residues long: Protein GrpE (252 aa).

The segment covering 1–22 (MHNPQSRGHNLSQAMSDQTVTN) has biased composition (polar residues). A disordered region spans residues 1 to 70 (MHNPQSRGHN…EEDQASEATS (70 aa)).

Belongs to the GrpE family. Homodimer.

It localises to the cytoplasm. In terms of biological role, participates actively in the response to hyperosmotic and heat shock by preventing the aggregation of stress-denatured proteins, in association with DnaK and GrpE. It is the nucleotide exchange factor for DnaK and may function as a thermosensor. Unfolded proteins bind initially to DnaJ; upon interaction with the DnaJ-bound protein, DnaK hydrolyzes its bound ATP, resulting in the formation of a stable complex. GrpE releases ADP from DnaK; ATP binding to DnaK triggers the release of the substrate protein, thus completing the reaction cycle. Several rounds of ATP-dependent interactions between DnaJ, DnaK and GrpE are required for fully efficient folding. This chain is Protein GrpE, found in Thermosynechococcus vestitus (strain NIES-2133 / IAM M-273 / BP-1).